The chain runs to 200 residues: Rho-related protein racH (200 aa).

Residue 11–18 (GDMSVGKT) coordinates GTP. The short motif at 33–41 (YVPTVFDNY) is the Effector region element. Residues 58–62 (DTAGS) and 117–120 (TKLD) contribute to the GTP site. The interval 178–200 (EELAKSKKDSKKGDKDSKDCIIQ) is disordered. At Cys-197 the chain carries Cysteine methyl ester. The S-geranylgeranyl cysteine moiety is linked to residue Cys-197. The propeptide at 198–200 (IIQ) is removed in mature form.

The protein belongs to the small GTPase superfamily. Rho family.

Its subcellular location is the cell membrane. The protein is Rho-related protein racH (racH) of Dictyostelium discoideum (Social amoeba).